Here is a 159-residue protein sequence, read N- to C-terminus: SsrA-binding protein (159 aa).

The protein belongs to the SmpB family.

The protein resides in the cytoplasm. Its function is as follows. Required for rescue of stalled ribosomes mediated by trans-translation. Binds to transfer-messenger RNA (tmRNA), required for stable association of tmRNA with ribosomes. tmRNA and SmpB together mimic tRNA shape, replacing the anticodon stem-loop with SmpB. tmRNA is encoded by the ssrA gene; the 2 termini fold to resemble tRNA(Ala) and it encodes a 'tag peptide', a short internal open reading frame. During trans-translation Ala-aminoacylated tmRNA acts like a tRNA, entering the A-site of stalled ribosomes, displacing the stalled mRNA. The ribosome then switches to translate the ORF on the tmRNA; the nascent peptide is terminated with the 'tag peptide' encoded by the tmRNA and targeted for degradation. The ribosome is freed to recommence translation, which seems to be the essential function of trans-translation. The protein is SsrA-binding protein of Coxiella burnetii (strain CbuK_Q154) (Coxiella burnetii (strain Q154)).